A 3414-amino-acid polypeptide reads, in one-letter code: Genome polyprotein (3414 aa).

A disordered region spans residues 1–30; the sequence is MVKKAILKGKGGGPPRRVSKETATKTRQPR. Residues 1–98 are Cytoplasmic-facing; sequence MVKKAILKGK…LQKRGKRRSA (98 aa). Residues 97–117 constitute a propeptide, ER anchor for the capsid protein C, removed in mature form by serine protease NS3; sequence SATDWMSWLLVITLLGMTIAA. A helical membrane pass occupies residues 99-119; it reads TDWMSWLLVITLLGMTIAATV. At 120-242 the chain is on the extracellular side; that stretch reads RKERDGSTVI…HLTRVEGWVW (123 aa). N-linked (GlcNAc...) asparagine; by host glycosylation occurs at asparagine 144. A helical membrane pass occupies residues 243–260; the sequence is KNRLLALAMVTVVWLTLE. A topological domain (cytoplasmic) is located at residue serine 261. The chain crosses the membrane as a helical span at residues 262–280; the sequence is VVTRVAVLVVLLCLAPVYA. Residues 281-727 are Extracellular-facing; that stretch reads SRCTHLENRD…HTVLGGAFNS (447 aa). 6 cysteine pairs are disulfide-bonded: cysteine 283–cysteine 310, cysteine 340–cysteine 396, cysteine 340–cysteine 401, cysteine 354–cysteine 385, cysteine 372–cysteine 396, and cysteine 372–cysteine 401. Positions 378 to 391 are fusion peptide; sequence DRGWGNHCGLFGKG. The N-linked (GlcNAc...) asparagine; by host glycan is linked to asparagine 434. Disulfide bonds link cysteine 466/cysteine 570 and cysteine 587/cysteine 618. Residues 728-748 traverse the membrane as a helical segment; it reads IFGGVGFLPKLLLGVALAWLG. Topologically, residues 749–755 are extracellular; it reads LNMRNPT. A helical transmembrane segment spans residues 756–776; that stretch reads MSMSFLLAGVLVLAMTLGVGA. Residues 777 to 1132 are Extracellular-facing; it reads DVGCAVDTER…RSMVVADNGE (356 aa). 6 cysteine pairs are disulfide-bonded: cysteine 780–cysteine 791, cysteine 831–cysteine 920, cysteine 955–cysteine 1000, cysteine 1057–cysteine 1106, cysteine 1068–cysteine 1090, and cysteine 1089–cysteine 1093. N-linked (GlcNAc...) asparagine; by host glycans are attached at residues asparagine 861, asparagine 983, and asparagine 999. Residues 1133-1153 traverse the membrane as a helical segment; the sequence is LLSEGGVPGIVALFVVLEYII. Residues 1154–1158 are Cytoplasmic-facing; the sequence is RRRPS. The chain crosses the membrane as a helical span at residues 1159–1179; sequence TGSTVVWGGIVVLALLVTGMV. The Lumenal portion of the chain corresponds to 1180–1187; the sequence is RMESLVRY. Residues 1188–1208 traverse the membrane as a helical segment; that stretch reads VVAVGITFHLELGPEIVALML. Over 1209 to 1293 the chain is Cytoplasmic; the sequence is LQAVFELRVG…LLMALMTQQD (85 aa). The helical transmembrane segment at 1294–1314 threads the bilayer; it reads VVTVHHGLVCFLSAASACSIW. Topologically, residues 1315–1327 are lumenal; that stretch reads RLLRGHREQKGLT. A helical membrane pass occupies residues 1328 to 1348; the sequence is WIVPLARLLGGEGSGIRLLAF. Residues 1349–1359 are Cytoplasmic-facing; it reads WELSAHRGRRS. The helical transmembrane segment at 1360-1377 threads the bilayer; sequence FSEPLTVVGVMLTLASGM. Residues 1378–1382 are Lumenal-facing; the sequence is MRHTS. The helical transmembrane segment at 1383-1403 threads the bilayer; it reads QEALCALAVASFLLLMLVLGT. Residues 1404–1454 lie on the Cytoplasmic side of the membrane; that stretch reads RKMQLVAEWSGCVEWHPELVNEGGEVSLRVRQDAMGNFHLTELEKEERMMA. The interacts with and activates NS3 protease stretch occupies residues 1410–1449; the sequence is AEWSGCVEWHPELVNEGGEVSLRVRQDAMGNFHLTELEKE. The helical intramembrane region spans 1455-1475; that stretch reads FWLIAGLAASAIHWSGIIGVM. Residues 1476–2160 lie on the Cytoplasmic side of the membrane; the sequence is GLWTLTKMLR…RMAERDAPEA (685 aa). The Peptidase S7 domain maps to 1490-1669; sequence SDLVFSGQGG…EAEKSRPNLP (180 aa). Catalysis depends on charge relay system; for serine protease NS3 activity residues histidine 1543, aspartate 1567, and serine 1627. The Helicase ATP-binding domain maps to 1675–1831; sequence TGWTSKGQIT…ESNGAITSEE (157 aa). Position 1688 to 1695 (1688 to 1695) interacts with ATP; sequence MHPGSGKT. Positions 1779–1782 match the DEAH box motif; the sequence is DEAH. A Helicase C-terminal domain is found at 1841-2000; sequence DGFDWITEYE…TLRGPVATFY (160 aa). Lysine 1883 carries the N6-acetyllysine; by host modification. The helical transmembrane segment at 2161–2181 threads the bilayer; that stretch reads FLTMVEMMVLGLATLGVIWCF. At 2182–2189 the chain is on the lumenal side; the sequence is VVRTSISR. The segment at residues 2190–2210 is an intramembrane region (helical); it reads MMLGTLVLLASLLLLWAGGVG. Residue tyrosine 2211 is a topological domain, lumenal. A helical membrane pass occupies residues 2212 to 2232; that stretch reads GNMAGVALIFYTLLTVLQPEA. The Cytoplasmic segment spans residues 2233-2244; that stretch reads GKQRSSDDNKLA. A helical membrane pass occupies residues 2245–2265; the sequence is YFLLTLCSLAGLVAANEMGFL. At 2266–2299 the chain is on the lumenal side; that stretch reads EKTKADLSTVLWSEREEPRPWSEWTNVDIQPARS. The helical intramembrane region spans 2300–2320; the sequence is WGTYVLVVSLFTPYIIHQLQT. Residues 2321–2343 lie on the Lumenal side of the membrane; the sequence is KIQQLVNSAVASGAQAMRDLGGG. The helical intramembrane region spans 2344–2364; it reads APFFGVAGHVMTLGVVSLIGA. The Lumenal portion of the chain corresponds to 2365–2368; that stretch reads TPTS. Residues 2369 to 2389 form a helical membrane-spanning segment; sequence LMVGVGLAALHLAIVVSGLEA. At 2390–2432 the chain is on the cytoplasmic side; it reads ELTQRAHKVFFSAMVRNPMVDGDVINPFGEGEAKPALYERRMS. The helical transmembrane segment at 2433-2453 threads the bilayer; that stretch reads LVLAIVLCLMSVVMNRTVASI. The Lumenal portion of the chain corresponds to 2454 to 2477; it reads TEASAVGLAAAGQLLRPEADTLWT. A helical membrane pass occupies residues 2478–2498; the sequence is MPVACGMSGVVRGSLWGFLPL. Over 2499–3414 the chain is Cytoplasmic; it reads GHRLWLRASG…WELRLESSII (916 aa). The mRNA cap 0-1 NS5-type MT domain occupies 2512-2776; it reads GGSEGDTLGD…ELDLGVGTRC (265 aa). Serine 2567 contributes to the S-adenosyl-L-methionine binding site. At serine 2567 the chain carries Phosphoserine. Lysine 2572 (for 2'-O-MTase activity) is an active-site residue. Glycine 2597, tryptophan 2598, threonine 2615, isoleucine 2616, aspartate 2642, and valine 2643 together coordinate S-adenosyl-L-methionine. Aspartate 2657 acts as the For 2'-O-MTase activity in catalysis. Position 2658 (isoleucine 2658) interacts with S-adenosyl-L-methionine. Residues lysine 2694 and glutamate 2730 each act as for 2'-O-MTase activity in the active site. The interaction with host SCRIB stretch occupies residues 2730-2734; the sequence is EMYYS. Tyrosine 2732 lines the S-adenosyl-L-methionine pocket. Positions 2950, 2954, 2959, and 2962 each coordinate Zn(2+). The RdRp catalytic domain occupies 3040–3189; sequence GLFYADDTAG…RPLDDRFGKA (150 aa). Positions 3224, 3240, and 3359 each coordinate Zn(2+).

The protein in the N-terminal section; belongs to the class I-like SAM-binding methyltransferase superfamily. mRNA cap 0-1 NS5-type methyltransferase family. Homodimer. Interacts (via N-terminus) with host EXOC1 (via C-terminus); this interaction results in EXOC1 degradation through the proteasome degradation pathway. In terms of assembly, forms heterodimers with envelope protein E in the endoplasmic reticulum and Golgi. As to quaternary structure, homodimer; in the endoplasmic reticulum and Golgi. Interacts with protein prM. Interacts with non-structural protein 1. Homodimer; Homohexamer when secreted. Interacts with envelope protein E. In terms of assembly, interacts (via N-terminus) with serine protease NS3. As to quaternary structure, forms a heterodimer with serine protease NS3. May form homooligomers. Forms a heterodimer with NS2B. Interacts with NS4B. Interacts with unphosphorylated RNA-directed RNA polymerase NS5; this interaction stimulates RNA-directed RNA polymerase NS5 guanylyltransferase activity. In terms of assembly, interacts with serine protease NS3. As to quaternary structure, homodimer. Interacts with host STAT2; this interaction inhibits the phosphorylation of the latter, and, when all viral proteins are present (polyprotein), targets STAT2 for degradation. Interacts with serine protease NS3. Interacts with host SCRIB; this interaction targets NS5 to the cell membrane periphery and nucleus, thereby allowing efficient host nuclear STAT1 inhibition. In terms of processing, specific enzymatic cleavages in vivo yield mature proteins. Cleavages in the lumen of endoplasmic reticulum are performed by host signal peptidase, whereas cleavages in the cytoplasmic side are performed by serine protease NS3. Signal cleavage at the 2K-4B site requires a prior NS3 protease-mediated cleavage at the 4A-2K site. Post-translationally, cleaved in post-Golgi vesicles by a host furin, releasing the mature small envelope protein M, and peptide pr. This cleavage is incomplete as up to 30% of viral particles still carry uncleaved prM. N-glycosylated. In terms of processing, N-glycosylated. The excreted form is glycosylated and this is required for efficient secretion of the protein from infected cells. Post-translationally, acetylated by host KAT5. Acetylation modulates NS3 RNA-binding and unwinding activities and plays an important positive role for viral replication. Phosphorylated on serines residues. This phosphorylation may trigger NS5 nuclear localization.

The protein resides in the virion. The protein localises to the host nucleus. It localises to the host cytoplasm. Its subcellular location is the host perinuclear region. It is found in the secreted. The protein resides in the virion membrane. The protein localises to the host endoplasmic reticulum membrane. It catalyses the reaction Selective hydrolysis of -Xaa-Xaa-|-Yaa- bonds in which each of the Xaa can be either Arg or Lys and Yaa can be either Ser or Ala.. It carries out the reaction RNA(n) + a ribonucleoside 5'-triphosphate = RNA(n+1) + diphosphate. The enzyme catalyses a ribonucleoside 5'-triphosphate + H2O = a ribonucleoside 5'-diphosphate + phosphate + H(+). The catalysed reaction is ATP + H2O = ADP + phosphate + H(+). It catalyses the reaction a 5'-end (5'-triphosphoguanosine)-ribonucleoside in mRNA + S-adenosyl-L-methionine = a 5'-end (N(7)-methyl 5'-triphosphoguanosine)-ribonucleoside in mRNA + S-adenosyl-L-homocysteine. It carries out the reaction a 5'-end (N(7)-methyl 5'-triphosphoguanosine)-ribonucleoside in mRNA + S-adenosyl-L-methionine = a 5'-end (N(7)-methyl 5'-triphosphoguanosine)-(2'-O-methyl-ribonucleoside) in mRNA + S-adenosyl-L-homocysteine + H(+). Its function is as follows. Plays a role in virus budding by binding to the cell membrane and gathering the viral RNA into a nucleocapsid that forms the core of a mature virus particle. During virus entry, may induce genome penetration into the host cytoplasm after hemifusion induced by the surface proteins. Can migrate to the cell nucleus where it modulates host functions. Inhibits RNA silencing by interfering with host Dicer. In terms of biological role, prevents premature fusion activity of envelope proteins in trans-Golgi by binding to envelope protein E at pH6.0. After virion release in extracellular space, gets dissociated from E dimers. Functionally, acts as a chaperone for envelope protein E during intracellular virion assembly by masking and inactivating envelope protein E fusion peptide. prM is the only viral peptide matured by host furin in the trans-Golgi network probably to avoid catastrophic activation of the viral fusion activity in acidic Golgi compartment prior to virion release. prM-E cleavage is inefficient, and many virions are only partially matured. These uncleaved prM would play a role in immune evasion. Its function is as follows. May play a role in virus budding. Exerts cytotoxic effects by activating a mitochondrial apoptotic pathway through M ectodomain. May display a viroporin activity. Binds to host cell surface receptor and mediates fusion between viral and cellular membranes. Envelope protein is synthesized in the endoplasmic reticulum in the form of heterodimer with protein prM. They play a role in virion budding in the ER, and the newly formed immature particle is covered with 60 spikes composed of heterodimer between precursor prM and envelope protein E. The virion is transported to the Golgi apparatus where the low pH causes dissociation of PrM-E heterodimers and formation of E homodimers. prM-E cleavage is inefficient, and many virions are only partially matured. These uncleaved prM would play a role in immune evasion. In terms of biological role, involved in immune evasion, pathogenesis and viral replication. Once cleaved off the polyprotein, is targeted to three destinations: the viral replication cycle, the plasma membrane and the extracellular compartment. Essential for viral replication. Required for formation of the replication complex and recruitment of other non-structural proteins to the ER-derived membrane structures. Excreted as a hexameric lipoparticle that plays a role against host immune response. Antagonizing the complement function. Binds to the host macrophages and dendritic cells. Inhibits signal transduction originating from Toll-like receptor 3 (TLR3). Functionally, component of the viral RNA replication complex that functions in virion assembly and antagonizes the host immune response. Its function is as follows. Required cofactor for the serine protease function of NS3. May have membrane-destabilizing activity and form viroporins. Displays three enzymatic activities: serine protease, NTPase and RNA helicase. NS3 serine protease, in association with NS2B, performs its autocleavage and cleaves the polyprotein at dibasic sites in the cytoplasm: C-prM, NS2A-NS2B, NS2B-NS3, NS3-NS4A, NS4A-2K and NS4B-NS5. NS3 RNA helicase binds RNA and unwinds dsRNA in the 3' to 5' direction. In terms of biological role, regulates the ATPase activity of the NS3 helicase activity. NS4A allows NS3 helicase to conserve energy during unwinding. Functionally, functions as a signal peptide for NS4B and is required for the interferon antagonism activity of the latter. Its function is as follows. Induces the formation of ER-derived membrane vesicles where the viral replication takes place. Inhibits interferon (IFN)-induced host STAT1 phosphorylation and nuclear translocation, thereby preventing the establishment of cellular antiviral state by blocking the IFN-alpha/beta pathway. Inhibits STAT2 translocation in the nucleus after IFN-alpha treatment. Replicates the viral (+) and (-) genome, and performs the capping of genomes in the cytoplasm. NS5 methylates viral RNA cap at guanine N-7 and ribose 2'-O positions. Besides its role in genome replication, also prevents the establishment of cellular antiviral state by blocking the interferon-alpha/beta (IFN-alpha/beta) signaling pathway. Inhibits host TYK2 and STAT2 phosphorylation, thereby preventing activation of JAK-STAT signaling pathway. This chain is Genome polyprotein, found in Tick-borne encephalitis virus (strain Hypr) (TBEV).